The primary structure comprises 547 residues: MSPLDDVVSPSQWMLWRLTGAALVVTLITSVIIVAADLYRHWQKRRSVGQIPLIHDGSWLSPKLQWRRPSFDAESEMARAYKKYSKNGKPFAWKTQNGLDIVIILPPECGKEYYSLPREKCSFMHWVRNEMFLNTVVDVTWRVPVEAVQVSSQSAPMDRLGRVIFDHLDRVLPLFLPGPGDHEWRQVNGSDMMDSLVRDLALGLFFTPGFGEESGLRRQMSAYMDGLAGQWFARQEAPYILEHLVWRLSPTCRRFQSTIQTVRQIVVPEVRRRIQQIRSNDKDGCFLLSDLLIKQALKRGTFCREGKTGEQETLEELIVDEIMFMYMETVAPFHLVTTCMVFRIMRHPEYVAPLREELDRALKICGGEWSFEIFNHTPKMESFTREILRLHNPTSISGARCVMEPITIPSLGMALERGTHISLPSRFIHTDPENYPDPMTFNGYRFYDEASGTCNVQKTLAPSEAWLPFGIGTSACPARLLGTRTCQALFAKILMDYDVGQMDDKHVPLQMWLLGIYVPSPTISISARRRDARRTHEALGSKLKPEE.

The chain crosses the membrane as a helical span at residues 18 to 38 (LTGAALVVTLITSVIIVAADL). Residue Cys476 coordinates heme. The segment at 528 to 547 (RRRDARRTHEALGSKLKPEE) is disordered. Basic and acidic residues predominate over residues 534–547 (RTHEALGSKLKPEE).

Belongs to the cytochrome P450 family. Requires heme as cofactor.

It localises to the membrane. The enzyme catalyses campesine B + campesine C + reduced [NADPH--hemoprotein reductase] + O2 = campesine D + oxidized [NADPH--hemoprotein reductase] + 2 H2O + 2 H(+). It catalyses the reaction 2 campesine B + reduced [NADPH--hemoprotein reductase] + O2 = campesine F + oxidized [NADPH--hemoprotein reductase] + 2 H2O + H(+). The catalysed reaction is campesine C + campesine A + reduced [NADPH--hemoprotein reductase] + O2 = campesine E + oxidized [NADPH--hemoprotein reductase] + 2 H2O + 2 H(+). Its pathway is alkaloid biosynthesis. Functionally, cytochrome P450 monooxygenase; part of the gene cluster that mediates the biosynthesis of campesine G, a dimeric indole piperazine alkaloid that shows good insecticidal activity Galleria mellonella. Within the pathway, cpsD acts as a dimerase that simultaneously catalyzes one C-C bond (C3-C3') and two C-N bonds (C2-N16' and C2'-N16) coupling reactions between campesines B and C to produce a heterodimer with unexpected 6/5/6/6/6/6/5/6 eight-ring scaffold called campesine D. CpsD is also able to catalyze oxidative heterocoupling od campesines A with B to produce campesine F and campesines A with C to produce campesine E. The non-canonical non-ribosomal peptide synthetase cpsA catalyzes the first steps of the pathway by producing L-tryptophanal and L-valinal from their respective amino-acids. These products condensate spontaneously to form trypyl-valyl pyrazine also known as didehydrocampesine A. The NmrA-like family domain-containing oxidoreductase cpsB is the next enzyme in cps pathway and reduces the unstable didehydrocampesine A to campesine A. The methyltransferase cpsF and the acetyltransferase cpsE both recognize N13 of piperazine ring to carry out methylation and acetylation of campesine A to produce campesine C and B, respectively. The cytochrome P450 monooxygenase cpsD then acts as a dimerase that catalyzes oxidative heterocoupling between campesine B and C to produce heterodimers with unexpected 6/5/6/6/6/6/5/6 eight-ring scaffold called campesine D. Finally,the cytochrome P450 monooxygenase cpsC is a regioselective dehydrogenase that catalyzes dehydrogenation reaction towards C2-N1 to produce campesine G. In Aspergillus campestris (strain IBT 28561), this protein is Cytochrome P450 monooxygenase cpsD.